A 222-amino-acid polypeptide reads, in one-letter code: GTP cyclohydrolase 1 (222 aa).

Residues Cys-111, His-114, and Cys-182 each contribute to the Zn(2+) site.

It belongs to the GTP cyclohydrolase I family. As to quaternary structure, homomer.

The catalysed reaction is GTP + H2O = 7,8-dihydroneopterin 3'-triphosphate + formate + H(+). Its pathway is cofactor biosynthesis; 7,8-dihydroneopterin triphosphate biosynthesis; 7,8-dihydroneopterin triphosphate from GTP: step 1/1. The protein is GTP cyclohydrolase 1 of Klebsiella pneumoniae (strain 342).